We begin with the raw amino-acid sequence, 216 residues long: Uracil phosphoribosyltransferase (216 aa).

5-phospho-alpha-D-ribose 1-diphosphate contacts are provided by residues R85, R110, and 135–143 (DPMVATGYS). Residues I200 and 205–207 (GDA) each bind uracil. Residue D206 participates in 5-phospho-alpha-D-ribose 1-diphosphate binding.

The protein belongs to the UPRTase family. It depends on Mg(2+) as a cofactor.

The enzyme catalyses UMP + diphosphate = 5-phospho-alpha-D-ribose 1-diphosphate + uracil. Its pathway is pyrimidine metabolism; UMP biosynthesis via salvage pathway; UMP from uracil: step 1/1. With respect to regulation, allosterically activated by GTP. Functionally, catalyzes the conversion of uracil and 5-phospho-alpha-D-ribose 1-diphosphate (PRPP) to UMP and diphosphate. The protein is Uracil phosphoribosyltransferase of Burkholderia cenocepacia (strain ATCC BAA-245 / DSM 16553 / LMG 16656 / NCTC 13227 / J2315 / CF5610) (Burkholderia cepacia (strain J2315)).